The following is a 598-amino-acid chain: Chromodomain Y-like protein (598 aa).

The disordered stretch occupies residues 1-76; it reads MTFQASHRSA…VDKRKNKKGK (76 aa). The segment covering 44 to 56 has biased composition (polar residues); it reads PSISVSSEQSGAQ. In terms of domain architecture, Chromo spans 61 to 121; it reads LQVERIVDKR…RHTEKQKEST (61 aa). The tract at residues 61–309 is interaction with EZH2; sequence LQVERIVDKR…NIQTSVTGVT (249 aa). Positions 65–76 are enriched in basic and acidic residues; sequence RIVDKRKNKKGK. Phosphoserine is present on Ser-88. Basic and acidic residues predominate over residues 112-121; sequence RHTEKQKEST. Residues 112–149 are disordered; that stretch reads RHTEKQKESTLTRTNRTSPNNARKQISRSTNSNFSKTS. Residues 122–149 are compositionally biased toward polar residues; sequence LTRTNRTSPNNARKQISRSTNSNFSKTS. Lys-135 is modified (N6,N6,N6-trimethyllysine; by EHMT2; alternate). At Lys-135 the chain carries N6,N6-dimethyllysine; by EHMT2; alternate. Lys-135 is modified (N6-methyllysine; by EHMT2; alternate). 3 positions are modified to phosphoserine: Ser-170, Ser-201, and Ser-216. The disordered stretch occupies residues 204–226; that stretch reads KSRTAVDGFQSESPEKLDPVEQG. The segment at 362–594 is acetyl-CoA-binding domain; the sequence is SENNSLNPEV…DSMLKYLQRK (233 aa).

In terms of assembly, forms multimers and multimerization is required for stable binding to chromatin. Interacts with HDAC1 and HDAC2 via its C-terminal acetyl-CoA-binding domain. Interacts with EZH2, EED, SUZ12, REST, EHMT1 and EHMT2. Part of a complex containing at least CDYL, REST, WIZ, SETB1, EHMT1 and EHMT2. Part of a complex containing at least CDYL, MIER1, MIER2, HDAC1 and HDAC2. Interacts with CHAF1A and CHAF1B; bridging the CAF-1 complex to the MCM2-7 (MCM) complex. Interacts with MCM3 and MCM5; bridging the CAF-1 complex to the MCM2-7 (MCM) complex. Recruited to Xist RNA-coated X chromosome. Interacts with EHMT2 and PRDM9; interaction only takes place when PRDM9 is bound to hotspot DNA. As to expression, expressed in the hippocampus with reduced expression in epileptic tissue compared to normal adjacent tissue (at protein level). Ubiquitous. Expressed at moderate levels in all tissues examined. Isoform 2: Most abundantly expressed isoform.

The protein resides in the nucleus. It localises to the chromosome. It catalyses the reaction 3-hydroxybutanoyl-CoA = (2E)-butenoyl-CoA + H2O. Chromatin reader protein that recognizes and binds histone H3 trimethylated at 'Lys-9', dimethylated at 'Lys-27' and trimethylated at 'Lys-27' (H3K9me3, H3K27me2 and H3K27me3, respectively). Part of multimeric repressive chromatin complexes, where it is required for transmission and restoration of repressive histone marks, thereby preserving the epigenetic landscape. Required for chromatin targeting and maximal enzymatic activity of Polycomb repressive complex 2 (PRC2); acts as a positive regulator of PRC2 activity by bridging the pre-existing histone H3K27me3 and newly recruited PRC2 on neighboring nucleosomes. Acts as a corepressor for REST by facilitating histone-lysine N-methyltransferase EHMT2 recruitment and H3K9 dimethylation at REST target genes for repression. Involved in X chromosome inactivation in females: recruited to Xist RNA-coated X chromosome and facilitates propagation of H3K9me2 by anchoring EHMT2. Promotes EZH2 accumulation and H3K27me3 methylation at DNA double strand breaks (DSBs), thereby facilitating transcriptional repression at sites of DNA damage and homology-directed repair of DSBs. Required for neuronal migration during brain development by repressing expression of RHOA. By repressing the expression of SCN8A, contributes to the inhibition of intrinsic neuronal excitability and epileptogenesis. In addition to acting as a chromatin reader, acts as a hydro-lyase. Shows crotonyl-coA hydratase activity by mediating the conversion of crotonyl-CoA ((2E)-butenoyl-CoA) to beta-hydroxybutyryl-CoA (3-hydroxybutanoyl-CoA), thereby acting as a negative regulator of histone crotonylation. Histone crotonylation is required during spermatogenesis; down-regulation of histone crotonylation by CDYL regulates the reactivation of sex chromosome-linked genes in round spermatids and histone replacement in elongating spermatids. By regulating histone crotonylation and trimethylation of H3K27, may be involved in stress-induced depression-like behaviors, possibly by regulating VGF expression. In terms of biological role, not able to recognize and bind histone H3K9me3, histone H3K27me2 and histone H3K27me3, due to the presence of a N-terminal extension that inactivates the chromo domain. Its function is as follows. Not able to recognize and bind histone H3K9me3, histone H3K27me2 and histone H3K27me3, due to the absence of the chromo domain. Acts as a negative regulator of isoform 2 by displacing isoform 2 from chromatin. This is Chromodomain Y-like protein from Homo sapiens (Human).